A 602-amino-acid polypeptide reads, in one-letter code: Elongation factor 4 (602 aa).

The region spanning 2–184 (KHIRNFSIIA…AIVAKVPAPR (183 aa)) is the tr-type G domain. Residues 14–19 (DHGKST) and 131–134 (NKMD) contribute to the GTP site.

Belongs to the TRAFAC class translation factor GTPase superfamily. Classic translation factor GTPase family. LepA subfamily.

It localises to the cell inner membrane. It carries out the reaction GTP + H2O = GDP + phosphate + H(+). Functionally, required for accurate and efficient protein synthesis under certain stress conditions. May act as a fidelity factor of the translation reaction, by catalyzing a one-codon backward translocation of tRNAs on improperly translocated ribosomes. Back-translocation proceeds from a post-translocation (POST) complex to a pre-translocation (PRE) complex, thus giving elongation factor G a second chance to translocate the tRNAs correctly. Binds to ribosomes in a GTP-dependent manner. In Verminephrobacter eiseniae (strain EF01-2), this protein is Elongation factor 4.